Consider the following 263-residue polypeptide: 3-methyl-2-oxobutanoate hydroxymethyltransferase (263 aa).

Mg(2+) contacts are provided by Asp-43 and Asp-82. 3-methyl-2-oxobutanoate is bound by residues 43–44, Asp-82, and Lys-111; that span reads DS. Glu-113 serves as a coordination point for Mg(2+). Glu-179 (proton acceptor) is an active-site residue.

Belongs to the PanB family. As to quaternary structure, homodecamer; pentamer of dimers. Mg(2+) serves as cofactor.

It localises to the cytoplasm. It carries out the reaction 3-methyl-2-oxobutanoate + (6R)-5,10-methylene-5,6,7,8-tetrahydrofolate + H2O = 2-dehydropantoate + (6S)-5,6,7,8-tetrahydrofolate. It functions in the pathway cofactor biosynthesis; (R)-pantothenate biosynthesis; (R)-pantoate from 3-methyl-2-oxobutanoate: step 1/2. Catalyzes the reversible reaction in which hydroxymethyl group from 5,10-methylenetetrahydrofolate is transferred onto alpha-ketoisovalerate to form ketopantoate. This is 3-methyl-2-oxobutanoate hydroxymethyltransferase from Neisseria gonorrhoeae (strain ATCC 700825 / FA 1090).